Reading from the N-terminus, the 307-residue chain is uncharacterized protein (307 aa).

Basic and acidic residues-rich tracts occupy residues 42-52 and 112-121; these read TCRSPGEDKCP and QKKEEPEGSH. Residues 42-153 form a disordered region; the sequence is TCRSPGEDKC…VPPAVASASA (112 aa). A compositionally biased stretch (basic residues) spans 129–139; that stretch reads KQHKKAKKRKS.

This is an uncharacterized protein from Mus musculus (Mouse).